We begin with the raw amino-acid sequence, 464 residues long: Argininosuccinate lyase (464 aa).

This sequence belongs to the lyase 1 family. Argininosuccinate lyase subfamily.

Its subcellular location is the cytoplasm. The catalysed reaction is 2-(N(omega)-L-arginino)succinate = fumarate + L-arginine. Its pathway is amino-acid biosynthesis; L-arginine biosynthesis; L-arginine from L-ornithine and carbamoyl phosphate: step 3/3. The sequence is that of Argininosuccinate lyase from Streptococcus suis (strain 98HAH33).